We begin with the raw amino-acid sequence, 711 residues long: Polyribonucleotide nucleotidyltransferase (711 aa).

Asp-489 and Asp-495 together coordinate Mg(2+). Residues 556–615 (PRIHTIKISPDKIKDVIGKGGSVIRALTEETGTTIEIEDDGTVKIAATDGEKAKHAIRRI) form the KH domain. In terms of domain architecture, S1 motif spans 625 to 693 (GRIYNGKVTR…RQGRVRLSIK (69 aa)).

Belongs to the polyribonucleotide nucleotidyltransferase family. In terms of assembly, component of the RNA degradosome, which is a multiprotein complex involved in RNA processing and mRNA degradation. Requires Mg(2+) as cofactor.

Its subcellular location is the cytoplasm. It catalyses the reaction RNA(n+1) + phosphate = RNA(n) + a ribonucleoside 5'-diphosphate. Involved in mRNA degradation. Catalyzes the phosphorolysis of single-stranded polyribonucleotides processively in the 3'- to 5'-direction. This is Polyribonucleotide nucleotidyltransferase from Cronobacter sakazakii (strain ATCC BAA-894) (Enterobacter sakazakii).